The sequence spans 254 residues: Homeobox protein Dlx4b (254 aa).

The segment at residues 129–188 is a DNA-binding region (homeobox); sequence IRKPRTIYSSVQLQALHQRFQQTQYLALPERADLAAKLGLTQTQVKIWFQNKRSKYKKIM.

The protein belongs to the distal-less homeobox family.

The protein localises to the nucleus. In terms of biological role, during larvae development, may be important for neurocranium morphogenesis. This is Homeobox protein Dlx4b (dlx4b) from Danio rerio (Zebrafish).